The chain runs to 360 residues: 1-deoxy-D-xylulose 5-phosphate reductoisomerase (360 aa).

Positions 7, 8, 9, 10, and 115 each coordinate NADPH. Lysine 116 is a binding site for 1-deoxy-D-xylulose 5-phosphate. Glutamate 117 provides a ligand contact to NADPH. Residue aspartate 135 participates in Mn(2+) binding. 1-deoxy-D-xylulose 5-phosphate is bound by residues serine 136, glutamate 137, serine 159, and histidine 182. Mn(2+) is bound at residue glutamate 137. An NADPH-binding site is contributed by glycine 188. Residues serine 195, asparagine 200, lysine 201, and glutamate 204 each coordinate 1-deoxy-D-xylulose 5-phosphate. Residue glutamate 204 participates in Mn(2+) binding.

Belongs to the DXR family. Requires Mg(2+) as cofactor. Mn(2+) serves as cofactor.

The catalysed reaction is 2-C-methyl-D-erythritol 4-phosphate + NADP(+) = 1-deoxy-D-xylulose 5-phosphate + NADPH + H(+). It functions in the pathway isoprenoid biosynthesis; isopentenyl diphosphate biosynthesis via DXP pathway; isopentenyl diphosphate from 1-deoxy-D-xylulose 5-phosphate: step 1/6. In terms of biological role, catalyzes the NADPH-dependent rearrangement and reduction of 1-deoxy-D-xylulose-5-phosphate (DXP) to 2-C-methyl-D-erythritol 4-phosphate (MEP). In Campylobacter fetus subsp. fetus (strain 82-40), this protein is 1-deoxy-D-xylulose 5-phosphate reductoisomerase.